A 197-amino-acid polypeptide reads, in one-letter code: Nucleoside triphosphate pyrophosphatase (197 aa).

D75 serves as the catalytic Proton acceptor.

Belongs to the Maf family. Requires a divalent metal cation as cofactor.

It is found in the cytoplasm. The catalysed reaction is a ribonucleoside 5'-triphosphate + H2O = a ribonucleoside 5'-phosphate + diphosphate + H(+). The enzyme catalyses a 2'-deoxyribonucleoside 5'-triphosphate + H2O = a 2'-deoxyribonucleoside 5'-phosphate + diphosphate + H(+). Its function is as follows. Nucleoside triphosphate pyrophosphatase. May have a dual role in cell division arrest and in preventing the incorporation of modified nucleotides into cellular nucleic acids. The polypeptide is Nucleoside triphosphate pyrophosphatase (Haemophilus ducreyi (strain 35000HP / ATCC 700724)).